The sequence spans 299 residues: UTP--glucose-1-phosphate uridylyltransferase 1 (299 aa).

Belongs to the UDPGP type 2 family.

It catalyses the reaction alpha-D-glucose 1-phosphate + UTP + H(+) = UDP-alpha-D-glucose + diphosphate. It functions in the pathway carbohydrate metabolism; nucleotide-sugar metabolism. The protein is UTP--glucose-1-phosphate uridylyltransferase 1 (hasC1) of Streptococcus pyogenes serotype M6 (strain ATCC BAA-946 / MGAS10394).